Consider the following 618-residue polypeptide: Nuclear RNA export factor 1 (618 aa).

Residues 1 to 15 (MADEGKSYNEHDDRV) are compositionally biased toward basic and acidic residues. The tract at residues 1–113 (MADEGKSYNE…RGGAGTSQDG (113 aa)) is disordered. Ala-2 carries the post-translational modification N-acetylalanine. The minor non-specific RNA-binding stretch occupies residues 2-59 (ADEGKSYNEHDDRVSFPQRRKKGRGPFRWKCGEGNRRSGRGGSGVQSSRFEEDDGDVA). Residues 2-117 (ADEGKSYNEH…GTSQDGTTKN (116 aa)) are RNA-binding (RBD). An interaction with ALYREF/THOC4 and LUZP4 region spans residues 2–197 (ADEGKSYNEH…IIINASAPPY (196 aa)). Positions 19-28 (QRRKKGRGPF) are enriched in basic residues. Position 41 is an asymmetric dimethylarginine; alternate (Arg-41). Arg-41 is modified (omega-N-methylarginine; alternate). Positions 60-117 (MNDPQDGPRVRYNPYTNRPNRRGDGWHDRDRIHITVRRDRAPAERGGAGTSQDGTTKN) are major non-specific RNA-binding. Residues 60 to 117 (MNDPQDGPRVRYNPYTNRPNRRGDGWHDRDRIHITVRRDRAPAERGGAGTSQDGTTKN) form an RNA binding region. Positions 66–99 (GPRVRYNPYTNRPNRRGDGWHDRDRIHITVRRDR) match the Nuclear localization signal motif. Basic and acidic residues predominate over residues 80-102 (RRGDGWHDRDRIHITVRRDRAPA). The short motif at 82 to 109 (GDGWHDRDRIHITVRRDRAPAERGGAGT) is the Nuclear export signal element. In terms of domain architecture, RRM spans 118 to 197 (WFKITIPYGR…IIINASAPPY (80 aa)). 3'-nitrotyrosine is present on Tyr-125. 4 LRR repeats span residues 265 to 290 (ELLS…QKAP), 291 to 314 (NLKT…IKGL), 315 to 342 (KLEE…AIRE), and 343 to 370 (RFPK…TMLP). Residues 385–535 (LVLRFLQQYY…LCIVNDELFV (151 aa)) enclose the NTF2 domain. Positions 564–618 (PEQQEMLQAFSTQSGMNLEWSQKCLQDNNWDYTRSAQAFTLLKAKGEIPEVAFMK) constitute a TAP-C domain.

This sequence belongs to the NXF family. In terms of assembly, heterodimer (via NTF2 domain) with NXT1. The formation of NXF1-NXT1 heterodimers is required for the NXF1-mediated nuclear mRNA export. Forms a complex with RANBP2/NUP358, NXT1 and RANGAP1. Associates with the exon junction complex (EJC). Associates with the transcription/export (TREX) complex. Found in a mRNA complex with UPF3A and UPF3B. Found in a post-splicing complex with RBM8A, UPF1, UPF2, UPF3A, UPF3B and RNPS1. Interacts (via N-terminus) with DHX9 (via N-terminus); this interaction is direct and negatively regulates NXF1-mediated nuclear export of constitutive transport element (CTE)-containing cellular mRNAs. Interacts with FYTTD1/UIF. Interacts with EIF4A3. Interacts with NUP42. Interacts with ALYREF/THOC4. Interacts with CHTOP. Interacts with FRG1 (via N-terminus). Interacts with LUZP4. Interacts with FMR1; the interaction occurs in a mRNA-dependent and polyribosomes-independent manner in the nucleus. Interacts with CPSF6 (via N-terminus); this interaction is direct. Interacts with RBM15. Interacts with RBM15B. Interacts with MCM3AP; this interaction is not mediated by RNA. Interacts with DDX3X (via C-terminus); this interaction may be partly involved in DDX3X nuclear export and in NXF1 localization to stress granules. Interacts with PABPC1/PABP1. Expressed ubiquitously.

It localises to the nucleus. The protein resides in the nucleoplasm. It is found in the nucleus speckle. The protein localises to the cytoplasm. Its subcellular location is the nuclear pore complex. It localises to the nucleus envelope. The protein resides in the stress granule. In terms of biological role, involved in the nuclear export of mRNA species bearing retroviral constitutive transport elements (CTE) and in the export of mRNA from the nucleus to the cytoplasm (TAP/NFX1 pathway). The NXF1-NXT1 heterodimer is involved in the export of HSP70 mRNA in conjunction with ALYREF/THOC4 and THOC5 components of the TREX complex. ALYREF/THOC4-bound mRNA is thought to be transferred to the NXF1-NXT1 heterodimer for export. Also involved in nuclear export of m6A-containing mRNAs: interaction between SRSF3 and YTHDC1 facilitates m6A-containing mRNA-binding to both SRSF3 and NXF1, promoting mRNA nuclear export. The polypeptide is Nuclear RNA export factor 1 (Nxf1) (Mus musculus (Mouse)).